The primary structure comprises 442 residues: SPRY domain-containing protein 3 (442 aa).

Residues 17–204 (DLNLHYRFLN…VRLHLNAELG (188 aa)) enclose the B30.2/SPRY domain. Residues 371-394 (EGEEEEEEEEEEEDGEEIEPEHEG) are disordered. Acidic residues predominate over residues 372-390 (GEEEEEEEEEEEDGEEIEP).

This Pongo abelii (Sumatran orangutan) protein is SPRY domain-containing protein 3 (SPRYD3).